We begin with the raw amino-acid sequence, 136 residues long: Small ribosomal subunit protein bS6 (136 aa).

Over residues 97–128 (EKEQSAMLSRPDRDDFPGKDEERPRPSRRQYE) the composition is skewed to basic and acidic residues. The interval 97–136 (EKEQSAMLSRPDRDDFPGKDEERPRPSRRQYEDVVEGGVE) is disordered.

Belongs to the bacterial ribosomal protein bS6 family.

In terms of biological role, binds together with bS18 to 16S ribosomal RNA. This chain is Small ribosomal subunit protein bS6, found in Bartonella bacilliformis (strain ATCC 35685 / KC583 / Herrer 020/F12,63).